A 309-amino-acid polypeptide reads, in one-letter code: tRNA pseudouridine synthase B (309 aa).

The Nucleophile role is filled by Asp39.

The protein belongs to the pseudouridine synthase TruB family. Type 1 subfamily.

It carries out the reaction uridine(55) in tRNA = pseudouridine(55) in tRNA. Functionally, responsible for synthesis of pseudouridine from uracil-55 in the psi GC loop of transfer RNAs. The polypeptide is tRNA pseudouridine synthase B (Bacillus licheniformis (strain ATCC 14580 / DSM 13 / JCM 2505 / CCUG 7422 / NBRC 12200 / NCIMB 9375 / NCTC 10341 / NRRL NRS-1264 / Gibson 46)).